Reading from the N-terminus, the 402-residue chain is uncharacterized protein (402 aa).

This sequence to M.genitalium MG148.

This is an uncharacterized protein from Caldicellulosiruptor sp. (strain Rt8B.4).